Here is a 500-residue protein sequence, read N- to C-terminus: Trehalose-6-phosphate synthase (500 aa).

Position 28 (arginine 28) interacts with D-glucose 6-phosphate. Residue 48 to 49 (GG) participates in UDP-alpha-D-glucose binding. Tyrosine 104 and aspartate 158 together coordinate D-glucose 6-phosphate. UDP-alpha-D-glucose is bound by residues arginine 300 and lysine 305. Arginine 338 serves as a coordination point for D-glucose 6-phosphate. A UDP-alpha-D-glucose-binding site is contributed by 403 to 407 (LVAKE).

This sequence belongs to the glycosyltransferase 20 family. In terms of assembly, homotetramer.

The enzyme catalyses ADP-alpha-D-glucose + D-glucose 6-phosphate = alpha,alpha-trehalose 6-phosphate + ADP + H(+). It carries out the reaction CDP-alpha-D-glucose + D-glucose 6-phosphate = alpha,alpha-trehalose 6-phosphate + CDP + H(+). It catalyses the reaction GDP-alpha-D-glucose + D-glucose 6-phosphate = alpha,alpha-trehalose 6-phosphate + GDP + H(+). The catalysed reaction is TDP-alpha-D-glucose + D-glucose 6-phosphate = 5-methyl-UDP + alpha,alpha-trehalose 6-phosphate + H(+). The enzyme catalyses D-glucose 6-phosphate + UDP-alpha-D-glucose = alpha,alpha-trehalose 6-phosphate + UDP + H(+). It participates in glycan biosynthesis; trehalose biosynthesis. Its function is as follows. Probably involved in the osmoprotection via the biosynthesis of trehalose and in the production of glycogen and alpha-glucan via the TreS-Pep2 branch involved in the biosynthesis of maltose-1-phosphate (M1P). Catalyzes the transfer of glucose from UDP-glucose (UDP-Glc) to D-glucose 6-phosphate (Glc-6-P) to form trehalose-6-phosphate. Probably also able to use ADP-Glc, CDP-Glc, GDP-Glc and TDP-Glc as glucosyl donors. The sequence is that of Trehalose-6-phosphate synthase from Mycobacterium marinum (strain ATCC BAA-535 / M).